We begin with the raw amino-acid sequence, 1544 residues long: Lysine-specific demethylase 5B (1544 aa).

Residues 32-73 (CPVFEPSWEEFADPFAFIHKIRPIAEQTGICKVRPPPDWQPP) form the JmjN domain. Positions 97–187 (TRVKLNFLDQ…ILNPYNLFLS (91 aa)) constitute an ARID domain. Glycyl lysine isopeptide (Lys-Gly) (interchain with G-Cter in SUMO2) cross-links involve residues lysine 148, lysine 204, lysine 209, lysine 242, lysine 274, and lysine 278. Residues 201–230 (TDTKDKEYKPHDIPQRQSVQPSETCPPARR) are disordered. Residues 202 to 214 (DTKDKEYKPHDIP) are compositionally biased toward basic and acidic residues. Residues 309–359 (LYVCLLCGSGNDEDRLLLCDGCDDSYHTFCLIPPLHDVPKGDWRCPKCLAQ) form a PHD-type 1 zinc finger. Tyrosine 425 is a 2-oxoglutarate binding site. A JmjC domain is found at 453 to 619 (EYLDSGWNLN…LGRQCVEHYR (167 aa)). Fe cation is bound by residues histidine 499 and glutamate 501. 2-oxoglutarate-binding residues include serine 507, asparagine 509, and lysine 517. Histidine 587 provides a ligand contact to Fe cation. The C5HC2 zinc finger occupies 692 to 744 (CVKCKTTCFMSAISCSCKPGLLVCLHHVKELCSCPPYKYKLRYRYTLDDLYPM). A Glycyl lysine isopeptide (Lys-Gly) (interchain with G-Cter in SUMO2) cross-link involves residue lysine 769. N6-acetyllysine is present on lysine 832. The residue at position 986 (serine 986) is a Phosphoserine. The segment at 1176–1224 (IKICLCQKAPAAPMIQCELCRDAFHTSCVAVPSISQGLRIWLCPHCRRS) adopts a PHD-type 2 zinc-finger fold. The residue at position 1328 (serine 1328) is a Phosphoserine. The segment at 1374–1400 (PSPAQQTDRSSPVRPSSEKNDCCRGKR) is disordered. The span at 1376-1387 (PAQQTDRSSPVR) shows a compositional bias: polar residues. The segment covering 1389–1400 (SSEKNDCCRGKR) has biased composition (basic and acidic residues). Lysine 1450 participates in a covalent cross-link: Glycyl lysine isopeptide (Lys-Gly) (interchain with G-Cter in SUMO2). Phosphoserine is present on serine 1456. A PHD-type 3 zinc finger spans residues 1484-1538 (DAICPAVSCLQPEGDEVDWVQCDGSCNQWFHQVCVGVSPEMAEKEDYICVRCTVK).

It belongs to the JARID1 histone demethylase family. In terms of assembly, interacts with FOXG1B, PAX9, MYC, MYCN and RB1. Interacts with HDAC1, HDAC4, HDAC5 and HDAC7. Interacts (via PHD-type 1 zinc finger) with histone H3 unmodified at 'Lys-4'; the interaction is inhibited when histone H3 is methylated at 'Arg-2' or 'Lys-4'. Requires Fe(2+) as cofactor. As to expression, ubiquitously expressed, with highest levels in testis. Down-regulated in melanoma and glioblastoma. Up-regulated in breast cancer (at protein level).

It localises to the nucleus. The catalysed reaction is N(6),N(6),N(6)-trimethyl-L-lysyl(4)-[histone H3] + 3 2-oxoglutarate + 3 O2 = L-lysyl(4)-[histone H3] + 3 formaldehyde + 3 succinate + 3 CO2. With respect to regulation, several specific inhibitors are being developed and tested. The inhibitor KDOAM-25 inhibits its demethylase activity, resulting to cell cycle arrest in myeloma cells. Its function is as follows. Histone demethylase that demethylates 'Lys-4' of histone H3, thereby playing a central role in histone code. Does not demethylate histone H3 'Lys-9' or H3 'Lys-27'. Demethylates trimethylated, dimethylated and monomethylated H3 'Lys-4'. Acts as a transcriptional corepressor for FOXG1B and PAX9. Favors the proliferation of breast cancer cells by repressing tumor suppressor genes such as BRCA1 and HOXA5. In contrast, may act as a tumor suppressor for melanoma. Represses the CLOCK-BMAL1 heterodimer-mediated transcriptional activation of the core clock component PER2. This is Lysine-specific demethylase 5B (KDM5B) from Homo sapiens (Human).